Here is a 299-residue protein sequence, read N- to C-terminus: Biotin transporter (299 aa).

A run of 10 helical transmembrane segments spans residues 2-22 (ALLIITTILWAFSFSFYGEYL), 26-46 (VDSYFAVLVRVGLAALVFLPF), 56-76 (TVGLYMLVGAMQLGVMYMLSF), 81-101 (YLTVSELLLFTVLTPLYITLI), 110-130 (LRWGYAFSALLAVIGAGIIRY), 137-157 (FWTGLLLVQLSNITFAIGMVG), 172-192 (AFAWFYLGAFLVAVIAWFLLG), 202-222 (LQWGILVFLGVVASGIGYFMW), 233-253 (TLGIMNNMHVPAGLLVNLAIW), and 256-276 (QPHWPTFITGALVILASLWVH). EamA domains lie at 3-128 (LLII…AGII) and 139-274 (TGLL…ASLW).

It belongs to the drug/metabolite transporter (DMT) superfamily. 10 TMS drug/metabolite exporter (DME) (TC 2.A.7.3) family.

It localises to the cell inner membrane. It carries out the reaction biotin(in) = biotin(out). Its function is as follows. Uptake of biotin. In Escherichia coli O157:H7, this protein is Biotin transporter.